Consider the following 69-residue polypeptide: UPF0337 protein XAC4007 (69 aa).

Belongs to the UPF0337 (CsbD) family.

In Xanthomonas axonopodis pv. citri (strain 306), this protein is UPF0337 protein XAC4007.